Here is an 80-residue protein sequence, read N- to C-terminus: uncharacterized protein (80 aa).

This is an uncharacterized protein from Methanothermobacter thermautotrophicus (Methanobacterium thermoformicicum).